The following is a 309-amino-acid chain: HPr kinase/phosphorylase (309 aa).

Active-site residues include His-138 and Lys-159. ATP is bound at residue 153 to 160 (GDSGIGKS). Ser-160 is a Mg(2+) binding site. Residue Asp-177 is the Proton acceptor; for phosphorylation activity. Proton donor; for dephosphorylation activity of the active site. The important for the catalytic mechanism of both phosphorylation and dephosphorylation stretch occupies residues 201–210 (LEIRGVGIID). Glu-202 contributes to the Mg(2+) binding site. Arg-243 is an active-site residue. The segment at 264-269 (PVKTGR) is important for the catalytic mechanism of dephosphorylation.

This sequence belongs to the HPrK/P family. Homohexamer. Requires Mg(2+) as cofactor.

The catalysed reaction is [HPr protein]-L-serine + ATP = [HPr protein]-O-phospho-L-serine + ADP + H(+). It catalyses the reaction [HPr protein]-O-phospho-L-serine + phosphate + H(+) = [HPr protein]-L-serine + diphosphate. Functionally, catalyzes the ATP- as well as the pyrophosphate-dependent phosphorylation of a specific serine residue in HPr, a phosphocarrier protein of the phosphoenolpyruvate-dependent sugar phosphotransferase system (PTS). HprK/P also catalyzes the pyrophosphate-producing, inorganic phosphate-dependent dephosphorylation (phosphorolysis) of seryl-phosphorylated HPr (P-Ser-HPr). The two antagonistic activities of HprK/P are regulated by several intracellular metabolites, which change their concentration in response to the absence or presence of rapidly metabolisable carbon sources (glucose, fructose, etc.) in the growth medium. Therefore, by controlling the phosphorylation state of HPr, HPrK/P is a sensor enzyme that plays a major role in the regulation of carbon metabolism and sugar transport: it mediates carbon catabolite repression (CCR), and regulates PTS-catalyzed carbohydrate uptake and inducer exclusion. The protein is HPr kinase/phosphorylase of Streptococcus thermophilus (strain ATCC BAA-491 / LMD-9).